Here is a 406-residue protein sequence, read N- to C-terminus: YQGVYPVKSNQDRFVVEDIVKFGSSFRFGLEAGSKPELLLAMSCLCKGNPEALLVCNGFKDAEYISLALLARKLALKHVIVLEQEEEVDMVIDISQKLSVRPVIGVRAKLRTKHSGHFGSTSGEKGKFGLTTTQVLRVVKKLQDSGMLDCLQLLHFHIGSQIPSTALLSDGVGEAAQIYSELVRLGARMKVVDFGGGLGIDYNGSKSGDSDLSVPYGLQEYAHVVNAIRFVCDRKSVKHPVICSESGRAIVSHHSILIFEAICLTAPATHNEPINIPFIMEGLSEDACADYWNLRDTAMRTGDGAFWFYADQWKQRCVEQFKEGTLGIEQLASVDGLCEWVLKAIGASDPVHTYNINLSVFTSIPDLWGIDQLFPIVPIHKLDQRPGARGILSDLTCDSDGKINKF.

K8 is subject to N6-(pyridoxal phosphate)lysine. 192 to 202 (VDFGGGLGIDY) provides a ligand contact to substrate.

It belongs to the Orn/Lys/Arg decarboxylase class-II family. SpeA subfamily. The cofactor is pyridoxal 5'-phosphate. Mg(2+) is required as a cofactor.

The enzyme catalyses L-arginine + H(+) = agmatine + CO2. Its pathway is amine and polyamine biosynthesis; agmatine biosynthesis; agmatine from L-arginine: step 1/1. In Theobroma cacao (Cacao), this protein is Arginine decarboxylase (SPE2).